Consider the following 465-residue polypeptide: Argininosuccinate lyase (465 aa).

Belongs to the lyase 1 family. Argininosuccinate lyase subfamily.

Its subcellular location is the cytoplasm. It carries out the reaction 2-(N(omega)-L-arginino)succinate = fumarate + L-arginine. It participates in amino-acid biosynthesis; L-arginine biosynthesis; L-arginine from L-ornithine and carbamoyl phosphate: step 3/3. The sequence is that of Argininosuccinate lyase from Clostridium botulinum (strain Eklund 17B / Type B).